The sequence spans 309 residues: Acetylglutamate kinase (309 aa).

Substrate is bound by residues 82-83 (GG), arginine 104, and asparagine 206.

The protein belongs to the acetylglutamate kinase family. ArgB subfamily.

It is found in the cytoplasm. It catalyses the reaction N-acetyl-L-glutamate + ATP = N-acetyl-L-glutamyl 5-phosphate + ADP. Its pathway is amino-acid biosynthesis; L-arginine biosynthesis; N(2)-acetyl-L-ornithine from L-glutamate: step 2/4. Catalyzes the ATP-dependent phosphorylation of N-acetyl-L-glutamate. The chain is Acetylglutamate kinase from Cupriavidus pinatubonensis (strain JMP 134 / LMG 1197) (Cupriavidus necator (strain JMP 134)).